The following is a 160-amino-acid chain: Transcriptional repressor NrdR (160 aa).

Residues methionine 1 to threonine 11 show a composition bias toward polar residues. A disordered region spans residues methionine 1 to glutamate 20. A zinc finger lies at cysteine 3 to cysteine 34. In terms of domain architecture, ATP-cone spans leucine 49–aspartate 139.

Belongs to the NrdR family. The cofactor is Zn(2+).

Its function is as follows. Negatively regulates transcription of bacterial ribonucleotide reductase nrd genes and operons by binding to NrdR-boxes. The polypeptide is Transcriptional repressor NrdR (Nitrobacter winogradskyi (strain ATCC 25391 / DSM 10237 / CIP 104748 / NCIMB 11846 / Nb-255)).